The chain runs to 78 residues: uncharacterized protein (78 aa).

2 consecutive transmembrane segments (helical) span residues 20-40 (SVYF…WLVV) and 57-77 (LLMD…ILIA).

Its subcellular location is the cell membrane. This is an uncharacterized protein from Escherichia coli (strain K12).